Consider the following 67-residue polypeptide: Toxin Cex8 (67 aa).

A signal peptide is located at residue Ala1. Residues 2–65 (KEGYLVNIYT…SYPYPEKSCG (64 aa)) form the LCN-type CS-alpha/beta domain. 4 disulfide bridges follow: Cys13-Cys64, Cys17-Cys40, Cys26-Cys45, and Cys30-Cys47. Residue Cys64 is modified to Cysteine amide. The propeptide occupies 65-67 (GRK).

Belongs to the long (4 C-C) scorpion toxin superfamily. Sodium channel inhibitor family. Beta subfamily. In terms of tissue distribution, expressed by the venom gland.

It localises to the secreted. Beta toxins bind voltage-independently at site-4 of sodium channels (Nav) and shift the voltage of activation toward more negative potentials thereby affecting sodium channel activation and promoting spontaneous and repetitive firing. The polypeptide is Toxin Cex8 (Centruroides exilicauda (Bark scorpion)).